The primary structure comprises 513 residues: Coniferin beta-glucosidase (513 aa).

The signal sequence occupies residues 1-23 (MEVSVLMWVLLFYSLLGFQVTTA). A beta-D-glucoside-binding positions include glutamine 44, histidine 145, and 190-191 (NE). Glutamate 191 acts as the Proton donor in catalysis. The cysteines at positions 210 and 219 are disulfide-linked. Asparagine 223 carries N-linked (GlcNAc...) asparagine glycosylation. Residues tyrosine 336 and glutamate 408 each contribute to the a beta-D-glucoside site. The active-site Nucleophile is the glutamate 408. The N-linked (GlcNAc...) asparagine glycan is linked to asparagine 447. A beta-D-glucoside is bound by residues tryptophan 457, 464 to 465 (EW), and phenylalanine 473.

The protein belongs to the glycosyl hydrolase 1 family. As to quaternary structure, homodimer. Post-translationally, glycosylated.

It catalyses the reaction 4-O-(beta-D-glucosyl)-(E)-coniferol + H2O = (E)-coniferol + D-glucose. With respect to regulation, inhibited by glucono-1,5-lactone, but not by bromoconduritol or conduritol B epoxide. In terms of biological role, involved in the release of monolignols for lignin biosynthesis. Unable to hydrolyze 4-nitrophenyl beta-cellobioside or alpha-linked methylumbelliferyl glucoside. The protein is Coniferin beta-glucosidase of Pinus contorta (Shore pine).